Reading from the N-terminus, the 766-residue chain is 5-methyltetrahydropteroyltriglutamate--homocysteine methyltransferase 1 (766 aa).

5-methyltetrahydropteroyltri-L-glutamate contacts are provided by Lys-18 and Asn-116. L-homocysteine contacts are provided by residues 438-440 (IGS) and Glu-491. L-methionine is bound by residues 438–440 (IGS) and Glu-491. Residues Asp-496, Tyr-519, 522–523 (RC), and Trp-568 each bind 5-methyltetrahydropteroyltri-L-glutamate. Asp-606 contacts L-homocysteine. Residue Asp-606 coordinates L-methionine. Zn(2+)-binding residues include His-648, Cys-650, His-659, and Glu-672. The active-site Proton donor is the His-702. A Zn(2+)-binding site is contributed by Cys-734.

Belongs to the vitamin-B12 independent methionine synthase family. Zn(2+) serves as cofactor.

It localises to the cytoplasm. The protein localises to the cytosol. It carries out the reaction 5-methyltetrahydropteroyltri-L-glutamate + L-homocysteine = tetrahydropteroyltri-L-glutamate + L-methionine. The protein operates within amino-acid biosynthesis; L-methionine biosynthesis via de novo pathway; L-methionine from L-homocysteine (MetE route): step 1/1. Functionally, catalyzes the transfer of a methyl group from 5-methyltetrahydrofolate to homocysteine resulting in methionine formation. This chain is 5-methyltetrahydropteroyltriglutamate--homocysteine methyltransferase 1, found in Oryza sativa subsp. japonica (Rice).